The primary structure comprises 195 residues: Small ribosomal subunit protein eS1 (195 aa).

This sequence belongs to the eukaryotic ribosomal protein eS1 family.

The polypeptide is Small ribosomal subunit protein eS1 (Methanothermobacter thermautotrophicus (strain ATCC 29096 / DSM 1053 / JCM 10044 / NBRC 100330 / Delta H) (Methanobacterium thermoautotrophicum)).